Consider the following 166-residue polypeptide: Small ribosomal subunit protein uS5 (166 aa).

One can recognise an S5 DRBM domain in the interval 11-74 (LREKLVAINR…EKARANMKRV (64 aa)).

It belongs to the universal ribosomal protein uS5 family. In terms of assembly, part of the 30S ribosomal subunit. Contacts proteins S4 and S8.

With S4 and S12 plays an important role in translational accuracy. Functionally, located at the back of the 30S subunit body where it stabilizes the conformation of the head with respect to the body. The polypeptide is Small ribosomal subunit protein uS5 (Alkalilimnicola ehrlichii (strain ATCC BAA-1101 / DSM 17681 / MLHE-1)).